A 187-amino-acid chain; its full sequence is Adenine phosphoribosyltransferase (187 aa).

Belongs to the purine/pyrimidine phosphoribosyltransferase family. Homodimer.

It is found in the cytoplasm. It catalyses the reaction AMP + diphosphate = 5-phospho-alpha-D-ribose 1-diphosphate + adenine. Its pathway is purine metabolism; AMP biosynthesis via salvage pathway; AMP from adenine: step 1/1. Functionally, catalyzes a salvage reaction resulting in the formation of AMP, that is energically less costly than de novo synthesis. The polypeptide is Adenine phosphoribosyltransferase (Paracoccus denitrificans (strain Pd 1222)).